We begin with the raw amino-acid sequence, 329 residues long: Capsular polysaccharide phosphotransferase WcwK (329 aa).

Belongs to the stealth family.

In Streptococcus pneumoniae, this protein is Capsular polysaccharide phosphotransferase WcwK (wcwK).